The sequence spans 276 residues: NADPH-dependent 7-cyano-7-deazaguanine reductase (276 aa).

Ile83–Ser85 serves as a coordination point for substrate. Ser85 to Lys86 contacts NADPH. The active-site Thioimide intermediate is the Cys184. Asp191 serves as the catalytic Proton donor. Substrate is bound at residue His223–Glu224. Arg252–Gly253 is a binding site for NADPH.

It belongs to the GTP cyclohydrolase I family. QueF type 2 subfamily. In terms of assembly, homodimer.

The protein localises to the cytoplasm. It carries out the reaction 7-aminomethyl-7-carbaguanine + 2 NADP(+) = 7-cyano-7-deazaguanine + 2 NADPH + 3 H(+). The protein operates within tRNA modification; tRNA-queuosine biosynthesis. Functionally, catalyzes the NADPH-dependent reduction of 7-cyano-7-deazaguanine (preQ0) to 7-aminomethyl-7-deazaguanine (preQ1). The chain is NADPH-dependent 7-cyano-7-deazaguanine reductase from Pseudomonas aeruginosa (strain LESB58).